The chain runs to 465 residues: Ran-binding protein 3-like (465 aa).

A RanBD1 domain is found at serine 276–aspartate 417.

As to quaternary structure, interacts with SMAD1, SMAD5 and SMAD8; the interaction (with SMAD at least) increases when SMAD1 is not phosphorylated and mediates SMAD1 nuclear export.

Its subcellular location is the nucleus. The protein resides in the cytoplasm. In terms of biological role, nuclear export factor for BMP-specific SMAD1/5/8 that plays a critical role in terminating BMP signaling and regulating mesenchymal stem cell differentiation by blocking osteoblast differentiation to promote myogenic differention. Directly recognizes dephosphorylated SMAD1/5/8 and mediates their nuclear export in a Ran-dependent manner. This chain is Ran-binding protein 3-like (RANBP3L), found in Homo sapiens (Human).